Here is an 898-residue protein sequence, read N- to C-terminus: Netrin receptor UNC5A (898 aa).

The first 25 residues, 1–25, serve as a signal peptide directing secretion; it reads MAVRPGLWPVLLGIVLAAWLRGSGA. The Extracellular portion of the chain corresponds to 26-361; that stretch reads QQSATVANPV…TASCPEDVAL (336 aa). The Ig-like domain occupies 44 to 141; it reads PHFLVEPEDV…SGTTKSQKAY (98 aa). 3 disulfide bridges follow: Cys-65–Cys-126, Cys-77–Cys-124, and Cys-170–Cys-221. N-linked (GlcNAc...) asparagine glycans are attached at residues Asn-107 and Asn-218. The Ig-like C2-type domain maps to 155–238; the sequence is PLAKEVSLEQ…RRRSTSAAVI (84 aa). TSP type-1 domains are found at residues 242–296 and 298–350; these read NGGW…TLCP and DGSW…DLCL. Residues Trp-245, Trp-248, and Trp-251 are each glycosylated (C-linked (Man) tryptophan). Intrachain disulfides connect Cys-254-Cys-291, Cys-258-Cys-295, and Cys-269-Cys-281. Residues Trp-301 and Trp-304 are each glycosylated (C-linked (Man) tryptophan). Disulfide bonds link Cys-310–Cys-344, Cys-314–Cys-349, and Cys-322–Cys-334. Residue Asn-343 is glycosylated (N-linked (GlcNAc...) asparagine). Residues 362 to 382 traverse the membrane as a helical segment; the sequence is YIGLVAVAVCLFLLLLALGLI. Residues 383–898 are Cytoplasmic-facing; that stretch reads YCRKKEGLDS…GLFTVSEAEC (516 aa). One can recognise a ZU5 domain in the interval 497-640; that stretch reads NMAYGTFNFL…LGRFALVGEA (144 aa). Residues 661 to 679 are interaction with DCC; it reads SLEYNIRVYCLHDTHDALK. In terms of domain architecture, Death spans 817-897; that stretch reads QKIIASLDPP…AGLFTVSEAE (81 aa).

It belongs to the unc-5 family. Homodimer and homooligomer. Interacts with the cytoplasmic part of DCC. Interacts with MAGED1. Interacts with PRKCABP, possibly mediating some interaction with PKC. Interacts (via extracellular domain) with FLRT2 (via extracellular domain). Interacts (via extracellular domain) with FLRT3 (via extracellular domain). In terms of processing, phosphorylated on cytoplasmic tyrosine residues. Phosphorylated by PKC in vitro. Proteolytically cleaved by caspases during apoptosis. The cleavage does not take place when the receptor is associated with netrin ligand. Its cleavage by caspases is required to induce apoptosis. Post-translationally, the two extracellular TSRs of UNC5A contain WxxWxxWxxC motifs that can be C-mannosylated on all tryptophans. DPY19L1 preferentially mannosylates the first two tryptophans and DPY19L3 prefers the third. C-mannosylation by DPY19L1 is required for transport of UNC5A from the endoplasmic reticulum to the cell surface. In terms of tissue distribution, mainly expressed in regions of differentiating neurons. Expressed at early stages of neural tube development in the ventral spinal cord. In developing hindbrain, it colocalizes with a number of cranial motor neuron subpopulations from embryonic E11 to E14, while DCC is expressed by motor neurons at E12. Also expressed in non-neural structures, such as the basal plane of the hindbrain and midbrain, in the developing hypothalamus, thalamus and in the pallidum.

Its subcellular location is the cell membrane. The protein localises to the membrane raft. It is found in the cell projection. It localises to the neuron projection. Functionally, receptor for netrin required for axon guidance. Functions in the netrin signaling pathway and promotes neurite outgrowth in response to NTN1. Mediates axon repulsion of neuronal growth cones in the developing nervous system in response to netrin. Axon repulsion in growth cones may be mediated by its association with DCC that may trigger signaling for repulsion. It also acts as a dependence receptor required for apoptosis induction when not associated with netrin ligand. The sequence is that of Netrin receptor UNC5A (Unc5a) from Rattus norvegicus (Rat).